The chain runs to 691 residues: MQGERASLGYLSEALNFEHGSSSSNGVIDHWENIHSLGDNDLQDYMIANSESNTSLANSVYHEQQGLRRFSLGEASSSGTKDEASSHNEQRMETRCFDGRGNEIIDLDPVFAQPSGTNQPVQNVNLNAEYIEIHEDINPYRGRSGFIEANGPGTRVSQPGRSFEENGVGTGSSVEGRRASCKRKALEGSISQSSSGGYHDFQRGESSSWTPGSTVFRPGNGLNISGSLDNGPRGMVSGTVPNFPVSAPNFPVSAIAESSSRNICVRSNPSDHQETVNPSTFAAGTVVRRPVPPSQLNLSRHLPADQHSLDLRPGQSFVVSRNPNSTPVSIPPGSRTMLPPFRWTGSSLVGGTSNSTAPVERNLHLDETRSRSIPGNTLEIPMFAAPEVGNFARSQSSRNVTNGNLNSASSVSRTGSTTSVPPPPPPSSNLAWTSYQNSPHYQRRRTERSELARRSLLSSLAADATNQRSGDHPTLRSLAPPASSDGLVLQPGGDNSQMHNRAYSRAGPLFDRQGDSVVGIPHPLRALAAASRGRSRLMVSQMQNVLDVMRRDANNNNLRLEDVMLLNHSVLFDGATGHDRYRDMRLDVDNMSYEELLALEERIGDVCTGVNEETISNRLKQRKYKSNTKSPQDAEPCCVCQEEYTEGEDMGTLECGHEFHSQCIKEWLKQKNLCPICKTTGLNTAKKRRIA.

5 disordered regions span residues 71–91 (SLGEASSSGTKDEASSHNEQR), 151–235 (GPGT…PRGM), 316–336 (SFVVSRNPNSTPVSIPPGSRT), 349–373 (VGGTSNSTAPVERNLHLDETRSRSI), and 395–501 (QSSR…MHNR). Residues 80–91 (TKDEASSHNEQR) are compositionally biased toward basic and acidic residues. Polar residues-rich tracts occupy residues 204–213 (GESSSWTPGS) and 317–328 (FVVSRNPNSTPV). Basic and acidic residues predominate over residues 361-370 (RNLHLDETRS). A compositionally biased stretch (polar residues) spans 395–406 (QSSRNVTNGNLN). Over residues 407-419 (SASSVSRTGSTTS) the composition is skewed to low complexity. Residues 429-440 (NLAWTSYQNSPH) are compositionally biased toward polar residues. A compositionally biased stretch (low complexity) spans 454–465 (RSLLSSLAADAT). The RING-type; atypical zinc finger occupies 637–678 (CCVCQEEYTEGEDMGTLECGHEFHSQCIKEWLKQKNLCPICK).

In terms of tissue distribution, expressed in stems, flowers, green siliques, cauline leaves, seeds and roots.

It catalyses the reaction S-ubiquitinyl-[E2 ubiquitin-conjugating enzyme]-L-cysteine + [acceptor protein]-L-lysine = [E2 ubiquitin-conjugating enzyme]-L-cysteine + N(6)-ubiquitinyl-[acceptor protein]-L-lysine.. It participates in protein modification; protein ubiquitination. Probable E3 ubiquitin-protein ligase that may possess E3 ubiquitin ligase activity in vitro. The chain is Probable E3 ubiquitin-protein ligase RHG1A from Arabidopsis thaliana (Mouse-ear cress).